Here is a 538-residue protein sequence, read N- to C-terminus: Mitochondria-eating protein (538 aa).

The interval 1-273 (MAENLKRLVS…PRSRSCSRSR (273 aa)) is interaction with YWHAG/14-3-3 protein gamma. S85 carries the phosphoserine modification. The interval 92–137 (GKPVDSKVPSLQNTFDRERRKDPSPRDRDMQQLDSNLNSTRSQLNQ) is disordered. Residues 106–122 (FDRERRKDPSPRDRDMQ) show a composition bias toward basic and acidic residues. Coiled-coil stretches lie at residues 118 to 186 (DRDM…ARHR) and 220 to 256 (QRDTEVTSDYKKQLRNLKEEIAVLSAEKSALQGRSSR). Over residues 123 to 137 (QLDSNLNSTRSQLNQ) the composition is skewed to polar residues. A phosphoserine mark is found at S156 and S159. 2 disordered regions span residues 174-227 (LKTL…EVTS) and 247-292 (KSAL…NRSK). Composition is skewed to basic and acidic residues over residues 181–209 (EDARHRHTDQRSSENRRSEPRSSEERRCE) and 216–227 (RNADQRDTEVTS). The segment covering 253–278 (RSSRSRSPSPAPRSRSCSRSRSASPS) has biased composition (low complexity). 3 positions are modified to phosphoserine: S285, S287, and S509.

Belongs to the MIEAP family. As to quaternary structure, interacts (via coiled-coil domains) with BNIP3L (via BH3 domain). Interacts (via coiled-coil domains) with BNIP3 (via BH3 domain). Interacts with YWHAG/14-3-3 protein gamma; a protein that also plays a role in MALM.

The protein resides in the cytoplasm. The protein localises to the cytosol. It localises to the mitochondrion outer membrane. It is found in the mitochondrion matrix. Functionally, key regulator of mitochondrial quality that mediates the repairing or degradation of unhealthy mitochondria in response to mitochondrial damage. Mediator of mitochondrial protein catabolic process (also named MALM) by mediating the degradation of damaged proteins inside mitochondria by promoting the accumulation in the mitochondrial matrix of hydrolases that are characteristic of the lysosomal lumen. Also involved in mitochondrion degradation of damaged mitochondria by promoting the formation of vacuole-like structures (named MIV), which engulf and degrade unhealthy mitochondria by accumulating lysosomes. The physical interaction of SPATA18/MIEAP, BNIP3 and BNIP3L/NIX at the mitochondrial outer membrane regulates the opening of a pore in the mitochondrial double membrane in order to mediate the translocation of lysosomal proteins from the cytoplasm to the mitochondrial matrix. Binds cardiolipin. May form molecular condensates (non-membrane-bounded organelles) within mitochondria that compartmentalize and promote cardiolipin metabolism. The polypeptide is Mitochondria-eating protein (SPATA18) (Macaca fascicularis (Crab-eating macaque)).